A 119-amino-acid chain; its full sequence is Ribosome-binding factor A (119 aa).

It belongs to the RbfA family. Monomer. Binds 30S ribosomal subunits, but not 50S ribosomal subunits or 70S ribosomes.

The protein localises to the cytoplasm. Functionally, one of several proteins that assist in the late maturation steps of the functional core of the 30S ribosomal subunit. Associates with free 30S ribosomal subunits (but not with 30S subunits that are part of 70S ribosomes or polysomes). Required for efficient processing of 16S rRNA. May interact with the 5'-terminal helix region of 16S rRNA. The polypeptide is Ribosome-binding factor A (Chlorobium phaeovibrioides (strain DSM 265 / 1930) (Prosthecochloris vibrioformis (strain DSM 265))).